Consider the following 196-residue polypeptide: ATP-dependent Clp protease proteolytic subunit (196 aa).

The active-site Nucleophile is the Ser101. His126 is a catalytic residue.

It belongs to the peptidase S14 family. Component of the chloroplastic Clp protease core complex.

It is found in the plastid. It localises to the chloroplast stroma. It catalyses the reaction Hydrolysis of proteins to small peptides in the presence of ATP and magnesium. alpha-casein is the usual test substrate. In the absence of ATP, only oligopeptides shorter than five residues are hydrolyzed (such as succinyl-Leu-Tyr-|-NHMec, and Leu-Tyr-Leu-|-Tyr-Trp, in which cleavage of the -Tyr-|-Leu- and -Tyr-|-Trp bonds also occurs).. Cleaves peptides in various proteins in a process that requires ATP hydrolysis. Has a chymotrypsin-like activity. Plays a major role in the degradation of misfolded proteins. The polypeptide is ATP-dependent Clp protease proteolytic subunit (Nicotiana tabacum (Common tobacco)).